The primary structure comprises 84 residues: Small ribosomal subunit protein bS16 (84 aa).

Belongs to the bacterial ribosomal protein bS16 family.

The sequence is that of Small ribosomal subunit protein bS16 from Desulforapulum autotrophicum (strain ATCC 43914 / DSM 3382 / VKM B-1955 / HRM2) (Desulfobacterium autotrophicum).